Here is a 281-residue protein sequence, read N- to C-terminus: 2-dehydro-3-deoxyphosphooctonate aldolase (281 aa).

Belongs to the KdsA family.

It localises to the cytoplasm. The enzyme catalyses D-arabinose 5-phosphate + phosphoenolpyruvate + H2O = 3-deoxy-alpha-D-manno-2-octulosonate-8-phosphate + phosphate. Its pathway is carbohydrate biosynthesis; 3-deoxy-D-manno-octulosonate biosynthesis; 3-deoxy-D-manno-octulosonate from D-ribulose 5-phosphate: step 2/3. It participates in bacterial outer membrane biogenesis; lipopolysaccharide biosynthesis. The polypeptide is 2-dehydro-3-deoxyphosphooctonate aldolase (Pseudomonas savastanoi pv. phaseolicola (strain 1448A / Race 6) (Pseudomonas syringae pv. phaseolicola (strain 1448A / Race 6))).